A 478-amino-acid chain; its full sequence is Catalase (478 aa).

The disordered stretch occupies residues 1–23 (MTNQLTTNEGQPWADNQHSQTAG). Residues H53 and N126 contribute to the active site. Residue Y336 coordinates heme.

Belongs to the catalase family. The cofactor is heme.

It localises to the cytoplasm. It carries out the reaction 2 H2O2 = O2 + 2 H2O. Its function is as follows. Decomposes hydrogen peroxide into water and oxygen; serves to protect cells from the toxic effects of hydrogen peroxide. The chain is Catalase (katA) from Latilactobacillus sakei (Lactobacillus sakei).